Reading from the N-terminus, the 785-residue chain is Pre-rRNA-processing protein TSR1 homolog (785 aa).

The disordered stretch occupies residues 1–59; that stretch reads MSTTGHRAGVFKKPSKPHKSWKGKRTKGEITSENRGREGVKQLTRSAHSTHRTISKDAR. A compositionally biased stretch (basic residues) spans 9–25; that stretch reads GVFKKPSKPHKSWKGKR. Over residues 26–40 the composition is skewed to basic and acidic residues; that stretch reads TKGEITSENRGREGV. Residues 83–243 form the Bms1-type G domain; that stretch reads APCLVTVVSL…LRILNETKKK (161 aa). Residues 307-426 form a disordered region; it reads PHPLKAHNKT…GETTASEMMF (120 aa). Over residues 376 to 409 the composition is skewed to acidic residues; it reads LDDEDDEDEEDSDEDMDDSDNEEVEDDSEEEEPM.

It belongs to the TRAFAC class translation factor GTPase superfamily. Bms1-like GTPase family. TSR1 subfamily.

It localises to the nucleus. The protein localises to the nucleolus. In terms of biological role, required during maturation of the 40S ribosomal subunit in the nucleolus. This chain is Pre-rRNA-processing protein TSR1 homolog (tag-151), found in Caenorhabditis elegans.